We begin with the raw amino-acid sequence, 368 residues long: Homoserine O-acetyltransferase (368 aa).

The AB hydrolase-1 domain occupies 43–354 (NVVVVCHALT…DYGHDAFLVE (312 aa)). Catalysis depends on Ser-148, which acts as the Nucleophile. Arg-220 provides a ligand contact to substrate. Catalysis depends on residues Asp-314 and His-348. Asp-349 is a substrate binding site.

It belongs to the AB hydrolase superfamily. MetX family. Homodimer.

It is found in the cytoplasm. It catalyses the reaction L-homoserine + acetyl-CoA = O-acetyl-L-homoserine + CoA. It participates in amino-acid biosynthesis; L-methionine biosynthesis via de novo pathway; O-acetyl-L-homoserine from L-homoserine: step 1/1. Transfers an acetyl group from acetyl-CoA to L-homoserine, forming acetyl-L-homoserine. The polypeptide is Homoserine O-acetyltransferase (Sulfurimonas autotrophica (strain ATCC BAA-671 / DSM 16294 / JCM 11897 / OK10)).